The primary structure comprises 237 residues: Uridylate kinase (237 aa).

Residue 12 to 15 (KLSG) coordinates ATP. The involved in allosteric activation by GTP stretch occupies residues 20–25 (GAEGFG). Position 54 (Gly54) interacts with UMP. The ATP site is built by Gly55 and Arg59. UMP-binding positions include Asp74 and 135–142 (TGSPFFTT). ATP is bound by residues Thr162, Tyr168, and Asp171.

It belongs to the UMP kinase family. Homohexamer.

Its subcellular location is the cytoplasm. The catalysed reaction is UMP + ATP = UDP + ADP. It functions in the pathway pyrimidine metabolism; CTP biosynthesis via de novo pathway; UDP from UMP (UMPK route): step 1/1. Its activity is regulated as follows. Allosterically activated by GTP. Inhibited by UTP. Its function is as follows. Catalyzes the reversible phosphorylation of UMP to UDP. The protein is Uridylate kinase of Actinobacillus succinogenes (strain ATCC 55618 / DSM 22257 / CCUG 43843 / 130Z).